Consider the following 127-residue polypeptide: MQDDPRYRVEVEVSPRFLAHQSTPDEGRYAFAYSIRIQNAGAVPARLIARHWQITDGNGRTEQVDGEGVVGEQPWLRPGEAFHYTSGVLLETEQGQMQGHYDMVADDGTEFIAPIAAFVLSVPRTLH.

Positions 3 to 127 (DDPRYRVEVE…FVLSVPRTLH (125 aa)) constitute an ApaG domain.

The protein is Protein ApaG of Xanthomonas euvesicatoria pv. vesicatoria (strain 85-10) (Xanthomonas campestris pv. vesicatoria).